A 380-amino-acid polypeptide reads, in one-letter code: Pregnancy-associated glycoprotein 1 (380 aa).

The signal sequence occupies residues 1–15; sequence MKWLVLLGLVAFSEC. The propeptide at 16 to 53 is activation peptide; the sequence is IVKIPLRRLKTMRNVVSGKNMLNNFLKEHAYSLSQISF. Residues Asn-57 and Asn-74 are each glycosylated (N-linked (GlcNAc...) asparagine). The 307-residue stretch at 71–377 folds into the Peptidase A1 domain; it reads YMGNITIGTP…DRGNDRIGLA (307 aa). The active site involves Asp-89. Cys-102 and Cys-107 are disulfide-bonded. Asn-125 and Asn-182 each carry an N-linked (GlcNAc...) asparagine glycan. A disulfide bond links Cys-261 and Cys-265. Asp-270 is a catalytic residue. Cys-303 and Cys-337 are oxidised to a cystine.

This sequence belongs to the peptidase A1 family. Post-translationally, N-Glycosylated; the glycans terminate in either N-acetyl-galactosamine (GalNAc) or N-acetyllactosamine. Terminal GalNAc on Asn-linked glycans is greatly reduced prior to parturition while lactosamine-type N-glycans remain unaltered. In terms of tissue distribution, trophoblast and placental tissue. Produced specifically in the invasive binucleate cells of the placenta. Becomes detectable in maternal serum soon after implantation.

It is found in the secreted. The protein resides in the extracellular space. Functionally, appears to be proteolytically inactive. The sequence is that of Pregnancy-associated glycoprotein 1 from Bos taurus (Bovine).